Reading from the N-terminus, the 319-residue chain is ATP-dependent 6-phosphofructokinase (319 aa).

Gly11 is a binding site for ATP. Residue 21 to 25 coordinates ADP; that stretch reads RAVVR. ATP contacts are provided by residues 72-73 and 102-105; these read RC and GDGS. Asp103 serves as a coordination point for Mg(2+). Residue 125–127 participates in substrate binding; it reads TID. Catalysis depends on Asp127, which acts as the Proton acceptor. Arg154 lines the ADP pocket. Residues Arg162 and 169 to 171 each bind substrate; that span reads MGR. ADP-binding positions include 185–187, Arg211, and 213–215; these read GAE and KKH. Substrate-binding positions include Glu222, Arg243, and 249-252; that span reads HVQR.

The protein belongs to the phosphofructokinase type A (PFKA) family. ATP-dependent PFK group I subfamily. Prokaryotic clade 'B1' sub-subfamily. Homotetramer. The cofactor is Mg(2+).

It localises to the cytoplasm. The catalysed reaction is beta-D-fructose 6-phosphate + ATP = beta-D-fructose 1,6-bisphosphate + ADP + H(+). It participates in carbohydrate degradation; glycolysis; D-glyceraldehyde 3-phosphate and glycerone phosphate from D-glucose: step 3/4. Its activity is regulated as follows. Allosterically activated by ADP and other diphosphonucleosides, and allosterically inhibited by phosphoenolpyruvate. Its function is as follows. Catalyzes the phosphorylation of D-fructose 6-phosphate to fructose 1,6-bisphosphate by ATP, the first committing step of glycolysis. The protein is ATP-dependent 6-phosphofructokinase of Bacillus cytotoxicus (strain DSM 22905 / CIP 110041 / 391-98 / NVH 391-98).